The primary structure comprises 681 residues: Potassium-transporting ATPase ATP-binding subunit (681 aa).

4 helical membrane passes run 37–57 (MFVVEVGTFITLLATIFPTYF), 64–84 (VGYNALVTFILFVTVLFANFA), 218–238 (IALTTVLVSLTIIFIVVVMTL), and 255–275 (IALLVCLIPTTIGGLLSAIGI). Aspartate 306 acts as the 4-aspartylphosphate intermediate in catalysis. ATP-binding positions include aspartate 343, glutamate 347, 375 to 382 (FSAETRMS), and lysine 394. Mg(2+) is bound by residues aspartate 517 and aspartate 521. Transmembrane regions (helical) follow at residues 573–595 (ALTTFSIANDVAKYFAILPAIIS), 615–635 (AILSALIYNAIIIPILIPIAM), and 655–675 (IYGLGGLIAPFVGIKLIDMII).

Belongs to the cation transport ATPase (P-type) (TC 3.A.3) family. Type IA subfamily. The system is composed of three essential subunits: KdpA, KdpB and KdpC.

The protein localises to the cell membrane. The catalysed reaction is K(+)(out) + ATP + H2O = K(+)(in) + ADP + phosphate + H(+). Functionally, part of the high-affinity ATP-driven potassium transport (or Kdp) system, which catalyzes the hydrolysis of ATP coupled with the electrogenic transport of potassium into the cytoplasm. This subunit is responsible for energy coupling to the transport system and for the release of the potassium ions to the cytoplasm. The protein is Potassium-transporting ATPase ATP-binding subunit of Caldanaerobacter subterraneus subsp. tengcongensis (strain DSM 15242 / JCM 11007 / NBRC 100824 / MB4) (Thermoanaerobacter tengcongensis).